The chain runs to 309 residues: Taste receptor type 2 member 114 (309 aa).

Topologically, residues 1-7 (MLSTMEG) are extracellular. Residues 8-28 (VLLSVSTSEAVLGIVGNTFIA) form a helical membrane-spanning segment. The Cytoplasmic portion of the chain corresponds to 29–43 (LVNCMDYNRNKKLSN). Residues 44–64 (IGFILTGLAISRICLVLILIT) traverse the membrane as a helical segment. The Extracellular portion of the chain corresponds to 65–87 (EAYIKIFYPQLLSPVNIIELISY). The helical transmembrane segment at 88–108 (LWIIICQLNVWFATSLSIFYF) threads the bilayer. Residues 109 to 127 (LKIANFSHYIFVWLKRRID) are Cytoplasmic-facing. Residues 128 to 148 (LVFFFLIGCLLISWLFSFPVV) traverse the membrane as a helical segment. The Extracellular segment spans residues 149–182 (AKMVKDNKMLYINTSWQIHMKKSELIINYVFTNG). N-linked (GlcNAc...) asparagine glycosylation occurs at Asn161. The chain crosses the membrane as a helical span at residues 183-203 (GVFLFFMIMLIVCFLLIISLW). The Cytoplasmic portion of the chain corresponds to 204-233 (RHRRQMESNKLGFRDLNTEVHVRTIKVLLS). The chain crosses the membrane as a helical span at residues 234-254 (FIILFILHFMGITINVICLLI). The Extracellular portion of the chain corresponds to 255 to 259 (PESNL). A helical transmembrane segment spans residues 260 to 280 (LFMFGLTTAFIYPGCHSLILI). At 281–309 (LANSRLKQCSVMILQLLKCCENGKELRDT) the chain is on the cytoplasmic side.

It belongs to the G-protein coupled receptor T2R family.

It is found in the membrane. Its function is as follows. Putative taste receptor which may play a role in the perception of bitterness. The chain is Taste receptor type 2 member 114 from Mus musculus (Mouse).